Here is a 287-residue protein sequence, read N- to C-terminus: L-ascorbate peroxidase 3 (287 aa).

At alanine 2 the chain carries N-acetylalanine. Histidine 40 (proton acceptor) is an active-site residue. The tract at residues 46–66 (DAQSKTGGPNGSIRNEEEHTH) is disordered. Residue histidine 160 coordinates heme b. The K(+) site is built by threonine 161, threonine 177, and aspartate 184. Residues 259–279 (ILAQSAFGVAVAAAVVAFGYF) traverse the membrane as a helical segment. An AKR2A-binding sequence (ABS) required for peroxisome membrane targeting motif is present at residues 281–287 (EIRKRMK).

This sequence belongs to the peroxidase family. Ascorbate peroxidase subfamily. In terms of assembly, interacts via its C-terminal region with AKR2A and AKR2B. It depends on heme b as a cofactor.

Its subcellular location is the peroxisome membrane. The protein resides in the glyoxysome membrane. The enzyme catalyses L-ascorbate + H2O2 = L-dehydroascorbate + 2 H2O. In terms of biological role, plays a key role in hydrogen peroxide removal. The sequence is that of L-ascorbate peroxidase 3 (APX3) from Arabidopsis thaliana (Mouse-ear cress).